Reading from the N-terminus, the 113-residue chain is MISFSLLLLISLLTCAGQLCQKQAVMCWRSDVYQRASALKWLIGAVILLAVGMLFWLRLLQILPLGIAYPMLSINFIMVTLAGKFFYQEKAGIKHWSGVVFIMLGILLMSLNE.

The next 3 membrane-spanning stretches (helical) occupy residues 37-57 (SALKWLIGAVILLAVGMLFWL), 62-82 (ILPLGIAYPMLSINFIMVTLA), and 91-111 (AGIKHWSGVVFIMLGILLMSL). In terms of domain architecture, EamA spans 45–111 (AVILLAVGML…IMLGILLMSL (67 aa)).

Belongs to the ArnE family. As to quaternary structure, heterodimer of ArnE and ArnF.

Its subcellular location is the cell inner membrane. Its pathway is bacterial outer membrane biogenesis; lipopolysaccharide biosynthesis. In terms of biological role, translocates 4-amino-4-deoxy-L-arabinose-phosphoundecaprenol (alpha-L-Ara4N-phosphoundecaprenol) from the cytoplasmic to the periplasmic side of the inner membrane. In Photorhabdus laumondii subsp. laumondii (strain DSM 15139 / CIP 105565 / TT01) (Photorhabdus luminescens subsp. laumondii), this protein is Probable 4-amino-4-deoxy-L-arabinose-phosphoundecaprenol flippase subunit ArnE.